Consider the following 218-residue polypeptide: Small ribosomal subunit protein uS3c (218 aa).

In terms of domain architecture, KH type-2 spans 43-118 (IKNYVQKNMK…KLNISITRIE (76 aa)).

It belongs to the universal ribosomal protein uS3 family. Part of the 30S ribosomal subunit.

It localises to the plastid. The protein resides in the chloroplast. This chain is Small ribosomal subunit protein uS3c (rps3), found in Populus trichocarpa (Western balsam poplar).